Consider the following 453-residue polypeptide: UDP-glycosyltransferase 76E9 (453 aa).

UDP-alpha-D-glucose contacts are provided by residues Ser279, 337–339 (APQ), 354–362 (HCGWNSTLE), and 376–379 (TTDQ).

It belongs to the UDP-glycosyltransferase family.

The sequence is that of UDP-glycosyltransferase 76E9 (UGT76E9) from Arabidopsis thaliana (Mouse-ear cress).